Here is a 157-residue protein sequence, read N- to C-terminus: Glutathione peroxidase (157 aa).

Cysteine 35 is an active-site residue.

It belongs to the glutathione peroxidase family.

It carries out the reaction 2 glutathione + H2O2 = glutathione disulfide + 2 H2O. In Lactococcus lactis subsp. cremoris (strain MG1363), this protein is Glutathione peroxidase (gpo).